The following is a 255-amino-acid chain: Indole-3-glycerol phosphate synthase (255 aa).

It belongs to the TrpC family.

The catalysed reaction is 1-(2-carboxyphenylamino)-1-deoxy-D-ribulose 5-phosphate + H(+) = (1S,2R)-1-C-(indol-3-yl)glycerol 3-phosphate + CO2 + H2O. Its pathway is amino-acid biosynthesis; L-tryptophan biosynthesis; L-tryptophan from chorismate: step 4/5. The chain is Indole-3-glycerol phosphate synthase from Streptococcus pneumoniae serotype 19F (strain G54).